The sequence spans 71 residues: Pseudonajatoxin b (71 aa).

Cystine bridges form between Cys-3–Cys-21, Cys-14–Cys-42, Cys-27–Cys-31, Cys-46–Cys-58, and Cys-59–Cys-64.

It belongs to the three-finger toxin family. Long-chain subfamily. Type II alpha-neurotoxin sub-subfamily. Expressed by the venom gland.

It localises to the secreted. Its function is as follows. Binds with high affinity to muscular (alpha-1/CHRNA1) and neuronal (alpha-7/CHRNA7) nicotinic acetylcholine receptor (nAChR) and inhibits acetylcholine from binding to the receptor, thereby impairing neuromuscular and neuronal transmission. This Pseudonaja textilis (Eastern brown snake) protein is Pseudonajatoxin b.